The sequence spans 599 residues: Sulfite reductase [NADPH] flavoprotein alpha-component (599 aa).

The region spanning 64 to 202 is the Flavodoxin-like domain; that stretch reads VTLISASQTG…AASEWRARVV (139 aa). FMN is bound by residues 70–75, 117–120, and 153–162; these read SQTGNA, STQG, and LGDTSYEFFC. The FAD-binding FR-type domain occupies 234–448; it reads DAPLTATLSV…IEHNDNFRLP (215 aa). FAD contacts are provided by residues threonine 322, alanine 356, 386–389, 404–406, tyrosine 410, and 419–422; these read RLYS, TVG, and GGAS. NADP(+)-binding positions include 519-520, 525-529, and aspartate 561; these read SR and KIYVQ. FAD is bound at residue tyrosine 599.

It belongs to the NADPH-dependent sulphite reductase flavoprotein subunit CysJ family. In the N-terminal section; belongs to the flavodoxin family. This sequence in the C-terminal section; belongs to the flavoprotein pyridine nucleotide cytochrome reductase family. As to quaternary structure, alpha(8)-beta(8). The alpha component is a flavoprotein, the beta component is a hemoprotein. It depends on FAD as a cofactor. FMN is required as a cofactor.

The catalysed reaction is hydrogen sulfide + 3 NADP(+) + 3 H2O = sulfite + 3 NADPH + 4 H(+). The protein operates within sulfur metabolism; hydrogen sulfide biosynthesis; hydrogen sulfide from sulfite (NADPH route): step 1/1. Functionally, component of the sulfite reductase complex that catalyzes the 6-electron reduction of sulfite to sulfide. This is one of several activities required for the biosynthesis of L-cysteine from sulfate. The flavoprotein component catalyzes the electron flow from NADPH -&gt; FAD -&gt; FMN to the hemoprotein component. In Salmonella paratyphi A (strain ATCC 9150 / SARB42), this protein is Sulfite reductase [NADPH] flavoprotein alpha-component.